Here is a 103-residue protein sequence, read N- to C-terminus: Photosystem II 5 kDa protein, chloroplastic (103 aa).

The transit peptide at 1-75 (MASMTMTATF…LAKVAMAEEE (75 aa)) directs the protein to the chloroplast.

Post-translationally, the maturation of the PSII-T precursor to its final form occurs through a two step process. First, a stromal intermediate is formed, which, upon translocation into the thylakoid membrane, is processed to the mature protein.

The protein resides in the plastid. It localises to the chloroplast thylakoid membrane. May be a component of the oxygen-evolving complex. This chain is Photosystem II 5 kDa protein, chloroplastic (PSBT), found in Arabidopsis thaliana (Mouse-ear cress).